A 67-amino-acid chain; its full sequence is DNA-directed RNA polymerases I, II, and III subunit RPABC5 (67 aa).

4 residues coordinate Zn(2+): C7, C10, C44, and C45.

It belongs to the archaeal Rpo10/eukaryotic RPB10 RNA polymerase subunit family. As to quaternary structure, component of the RNA polymerase I (Pol I), RNA polymerase II (Pol II) and RNA polymerase III (Pol III) complexes consisting of at least 13, 12 and 17 subunits, respectively. Pol I complex consists of a ten-subunit catalytic core composed of POLR1A/RPA1, POLR1B/RPA2, POLR1C/RPAC1, POLR1D/RPAC2, POLR1H/RPA12, POLR2E/RPABC1, POLR2F/RPABC2, POLR2H/RPABC3, POLR2K/RPABC4 and POLR2L/RPABC5; a mobile stalk subunit POLR1F/RPA43 protruding from the core and additional subunits homologous to general transcription factors POLR1E/RPA49 and POLR1G/RPA34. Part of Pol I pre-initiation complex (PIC), in which Pol I core assembles with RRN3 and promoter-bound UTBF and SL1/TIF-IB complex. Pol II complex contains a ten-subunit catalytic core composed of POLR2A/RPB1, POLR2B/RPB2, POLR2C/RPB3, POLR2I/RPB9, POLR2J/RPB11, POLR2E/RPABC1, POLR2F/RPABC2, POLR2H/RPABC3, POLR2K/RPABC4 and POLR2L/RPABC5 and a mobile stalk composed of two subunits POLR2D/RPB4 and POLR2G/RPB7. Part of Pol II(G) complex, in which Pol II core associates with an additional subunit POLR2M; unlike conventional Pol II, Pol II(G) functions as a transcriptional repressor. Part of TBP-based Pol II pre-initiation complex (PIC), in which Pol II core assembles with general transcription factors and other specific initiation factors including GTF2E1, GTF2E2, GTF2F1, GTF2F2, TCEA1, ERCC2, ERCC3, GTF2H2, GTF2H3, GTF2H4, GTF2H5, GTF2A1, GTF2A2, GTF2B and TBP; this large multi-subunit PIC complex mediates DNA unwinding and targets Pol II core to the transcription start site where the first phosphodiester bond forms. Pol III complex consists of a ten-subunit catalytic core composed of POLR3A/RPC1, POLR3B/RPC2, POLR1C/RPAC1, POLR1D/RPAC2, POLR3K/RPC10, POLR2E/RPABC1, POLR2F/RPABC2, POLR2H/RPABC3, POLR2K/RPABC4 and POLR2L/RPABC5; a mobile stalk composed of two subunits POLR3H/RPC8 and CRCP/RPC9, protruding from the core and functioning primarily in transcription initiation; and additional subunits homologous to general transcription factors of the RNA polymerase II machinery, POLR3C/RPC3-POLR3F/RPC6-POLR3G/RPC7 heterotrimer required for transcription initiation and POLR3D/RPC4-POLR3E/RPC5 heterodimer involved in both transcription initiation and termination.

It is found in the nucleus. Its subcellular location is the nucleolus. In terms of biological role, DNA-dependent RNA polymerase catalyzes the transcription of DNA into RNA using the four ribonucleoside triphosphates as substrates. Common component of RNA polymerases I, II and III which synthesize ribosomal RNA precursors, mRNA precursors and many functional non-coding RNAs, and a small RNAs, such as 5S rRNA and tRNAs, respectively. The polypeptide is DNA-directed RNA polymerases I, II, and III subunit RPABC5 (POLR2L) (Bos taurus (Bovine)).